The sequence spans 243 residues: tRNA (guanine-N(1)-)-methyltransferase (243 aa).

S-adenosyl-L-methionine is bound by residues G108 and 127–132; that span reads LGDFVL.

Belongs to the RNA methyltransferase TrmD family. In terms of assembly, homodimer.

The protein resides in the cytoplasm. It catalyses the reaction guanosine(37) in tRNA + S-adenosyl-L-methionine = N(1)-methylguanosine(37) in tRNA + S-adenosyl-L-homocysteine + H(+). Specifically methylates guanosine-37 in various tRNAs. The sequence is that of tRNA (guanine-N(1)-)-methyltransferase from Streptococcus equi subsp. zooepidemicus (strain H70).